A 295-amino-acid chain; its full sequence is Glutamyl-Q tRNA(Asp) synthetase (295 aa).

L-glutamate contacts are provided by residues 9 to 13 (RFAPT) and glutamate 45. The 'HIGH' region signature appears at 12–22 (PTPSGYLHFGS). Residues cysteine 101, cysteine 103, tyrosine 115, and cysteine 119 each coordinate Zn(2+). L-glutamate contacts are provided by tyrosine 172 and arginine 190. A 'KMSKS' region motif is present at residues 228-232 (KLGKS). Lysine 231 contributes to the ATP binding site.

This sequence belongs to the class-I aminoacyl-tRNA synthetase family. GluQ subfamily. Zn(2+) serves as cofactor.

Its function is as follows. Catalyzes the tRNA-independent activation of glutamate in presence of ATP and the subsequent transfer of glutamate onto a tRNA(Asp). Glutamate is transferred on the 2-amino-5-(4,5-dihydroxy-2-cyclopenten-1-yl) moiety of the queuosine in the wobble position of the QUC anticodon. The chain is Glutamyl-Q tRNA(Asp) synthetase from Pseudomonas syringae pv. syringae (strain B728a).